The following is a 186-amino-acid chain: MNSHSEALFEINQRLSSHIRTMSNFPVFDPQKITNDVEANIKRMTSILKSKRLTREDEDLMKMINDCSKVLHEMLLERIMLQQDSIQFFTEKEASDSPFSNSADTIDEDDDKKIKSRRLTKKQLLVLEGWFQKHKNHPYSQKDQTNLLIKSTKLSKSQVQNWISNRRRKEKNTKVSPELAALLLTG.

The homeobox; TALE-type DNA-binding region spans 112–174 (KKIKSRRLTK…NRRRKEKNTK (63 aa)).

The protein belongs to the TALE/M-ATYP homeobox family. Forms a heterodimer with A1.

Its subcellular location is the nucleus. Mating type proteins are sequence specific DNA-binding proteins that act as master switches in yeast differentiation by controlling gene expression in a cell type-specific fashion. Transcriptional corepressor that acts in conjunction with A1 to repress transcription both of homozygote-specific genes and of genes necessary for the white-opaque switch, a prerequisite for mating. The sequence is that of Mating-type-like protein ALPHA2 (MTLALPHA2) from Candida albicans (strain SC5314 / ATCC MYA-2876) (Yeast).